Consider the following 254-residue polypeptide: Ribosomal RNA small subunit methyltransferase A (254 aa).

S-adenosyl-L-methionine contacts are provided by asparagine 12, leucine 14, glycine 38, glutamate 59, aspartate 83, and asparagine 100.

Belongs to the class I-like SAM-binding methyltransferase superfamily. rRNA adenine N(6)-methyltransferase family. RsmA subfamily.

The protein localises to the cytoplasm. The enzyme catalyses adenosine(1518)/adenosine(1519) in 16S rRNA + 4 S-adenosyl-L-methionine = N(6)-dimethyladenosine(1518)/N(6)-dimethyladenosine(1519) in 16S rRNA + 4 S-adenosyl-L-homocysteine + 4 H(+). Its function is as follows. Specifically dimethylates two adjacent adenosines (A1518 and A1519) in the loop of a conserved hairpin near the 3'-end of 16S rRNA in the 30S particle. May play a critical role in biogenesis of 30S subunits. In Mycoplasma mobile (strain ATCC 43663 / 163K / NCTC 11711) (Mesomycoplasma mobile), this protein is Ribosomal RNA small subunit methyltransferase A.